A 427-amino-acid polypeptide reads, in one-letter code: Kallistatin (427 aa).

The first 20 residues, 1–20 (MHLIDYLLLLLVGLLALSHG), serve as a signal peptide directing secretion. N-linked (GlcNAc...) asparagine glycosylation is found at N33, N108, and N157. An N-linked (GlcNAc...) (complex) asparagine glycan is attached at N238.

The protein belongs to the serpin family. Monomer and some homodimers. In terms of processing, the N-terminus is blocked. Expressed by the liver and secreted in plasma.

It localises to the secreted. Its function is as follows. Inhibits human amidolytic and kininogenase activities of tissue kallikrein. Inhibition is achieved by formation of an equimolar, heat- and SDS-stable complex between the inhibitor and the enzyme, and generation of a small C-terminal fragment of the inhibitor due to cleavage at the reactive site by tissue kallikrein. The protein is Kallistatin (SERPINA4) of Homo sapiens (Human).